The sequence spans 242 residues: Triosephosphate isomerase (242 aa).

N9–K11 is a substrate binding site. H96 (electrophile) is an active-site residue. E165 serves as the catalytic Proton acceptor. Substrate is bound by residues G171, S204, and G225–G226.

Belongs to the triosephosphate isomerase family. In terms of assembly, homodimer.

The protein localises to the cytoplasm. The enzyme catalyses D-glyceraldehyde 3-phosphate = dihydroxyacetone phosphate. Its pathway is carbohydrate biosynthesis; gluconeogenesis. The protein operates within carbohydrate degradation; glycolysis; D-glyceraldehyde 3-phosphate from glycerone phosphate: step 1/1. In terms of biological role, involved in the gluconeogenesis. Catalyzes stereospecifically the conversion of dihydroxyacetone phosphate (DHAP) to D-glyceraldehyde-3-phosphate (G3P). This is Triosephosphate isomerase from Synechocystis sp. (strain ATCC 27184 / PCC 6803 / Kazusa).